The chain runs to 328 residues: 3-ketodihydrosphingosine reductase TSC10 (328 aa).

Leu16 is a binding site for NADP(+). Positions 19, 21, and 23 each coordinate NADPH. Residues 19-23 (GASQG) carry the GXSXG motif. Residue Leu24 participates in NADP(+) binding. 3 residues coordinate NADPH: Arg44, Lys48, and Asp73. Position 73 (Asp73) interacts with NADP(+). Residue Ser161 is the Proton donor of the active site. Tyr175, Lys179, and Ser210 together coordinate NADP(+). The Proton acceptor role is filled by Tyr175. Catalysis depends on Lys179, which acts as the Lowers pKa of active site Tyr. A helical membrane pass occupies residues 277-297 (FFQVIVSFIFSIIAPIANYVV).

This sequence belongs to the short-chain dehydrogenases/reductases (SDR) family.

It is found in the endoplasmic reticulum membrane. The catalysed reaction is sphinganine + NADP(+) = 3-oxosphinganine + NADPH + H(+). The protein operates within lipid metabolism; sphingolipid metabolism. Its function is as follows. Catalyzes the reduction of 3'-oxosphinganine (3-ketodihydrosphingosine/KDS) to sphinganine (dihydrosphingosine/DHS), the second step of de novo sphingolipid biosynthesis. The polypeptide is 3-ketodihydrosphingosine reductase TSC10 (TSC10) (Debaryomyces hansenii (strain ATCC 36239 / CBS 767 / BCRC 21394 / JCM 1990 / NBRC 0083 / IGC 2968) (Yeast)).